Reading from the N-terminus, the 249-residue chain is Syntaxin-10 (249 aa).

S2 carries the post-translational modification N-acetylserine. The Cytoplasmic segment spans residues 2–228 (SLEDPFFVVR…VSHMTSDRRQ (227 aa)). The stretch at 41–69 (EELDWTTNELRNGLRSIEWDLEDLEETIG) forms a coiled coil. At S108 the chain carries Phosphoserine. Residue T110 is modified to Phosphothreonine. S134, S140, and S143 each carry phosphoserine. The 63-residue stretch at 157–219 (QLIMDEQDQQ…DGVLRKLAKV (63 aa)) folds into the t-SNARE coiled-coil homology domain. A helical; Anchor for type IV membrane protein membrane pass occupies residues 229–249 (WCAIAVLVGVLLLVLILLFSL).

This sequence belongs to the syntaxin family. As to quaternary structure, interacts with VPS52. As to expression, expressed at high levels in heart, skeletal muscle and pancreas.

The protein resides in the golgi apparatus membrane. In terms of biological role, SNARE involved in vesicular transport from the late endosomes to the trans-Golgi network. The sequence is that of Syntaxin-10 (STX10) from Homo sapiens (Human).